The primary structure comprises 65 residues: Weak neurotoxin 8 (65 aa).

5 disulfide bridges follow: cysteine 3/cysteine 24, cysteine 6/cysteine 11, cysteine 17/cysteine 42, cysteine 46/cysteine 57, and cysteine 58/cysteine 63.

The protein belongs to the three-finger toxin family. Ancestral subfamily. Orphan group II sub-subfamily. In terms of tissue distribution, expressed by the venom gland.

Its subcellular location is the secreted. Functionally, binds with low affinity to muscular (alpha-1-beta-1-delta-epsilon/CHRNA1-CHRNB1-CHRND-CHRNE) and very low affinity to neuronal (alpha-7/CHRNA7) nicotinic acetylcholine receptor (nAChR). This Naja naja (Indian cobra) protein is Weak neurotoxin 8.